We begin with the raw amino-acid sequence, 407 residues long: Probable endo-beta-1,4-glucanase celB (407 aa).

Residues Met1 to Ala18 form the signal peptide. A glycan (N-linked (GlcNAc...) asparagine) is linked at Asn136. The Nucleophile role is filled by Glu216. Residue Glu221 is the Proton donor of the active site.

This sequence belongs to the glycosyl hydrolase 7 (cellulase C) family.

Its subcellular location is the secreted. It carries out the reaction Endohydrolysis of (1-&gt;4)-beta-D-glucosidic linkages in cellulose, lichenin and cereal beta-D-glucans.. In terms of biological role, has endoglucanase activity on substrates containing beta-1,4 glycosidic bonds, like in carboxymethylcellulose (CMC), hydroxyethylcellulose (HEC) and beta-glucan. Involved in the degradation of complex natural cellulosic substrates. The protein is Probable endo-beta-1,4-glucanase celB (celB) of Aspergillus fumigatus (strain ATCC MYA-4609 / CBS 101355 / FGSC A1100 / Af293) (Neosartorya fumigata).